The primary structure comprises 285 residues: Cell division protein DivIB (285 aa).

Residues 1-19 show a composition bias toward basic and acidic residues; sequence MNEKNKNDESKHQEDKLQD. Residues 1–20 form a disordered region; sequence MNEKNKNDESKHQEDKLQDQ. Residues 1–66 are Cytoplasmic-facing; the sequence is MNEKNKNDES…NRFNAMERNS (66 aa). A helical membrane pass occupies residues 67–87; the sequence is IHMIVILSIISLLLILLLSPL. The region spanning 88–158 is the POTRA domain; the sequence is MRFQKVEITG…QVAQIKIEEN (71 aa). Residues 88-285 are Extracellular-facing; it reads MRFQKVEITG…FQVGTYFQQY (198 aa).

The protein belongs to the FtsQ/DivIB family. DivIB subfamily.

The protein resides in the cell membrane. Functionally, cell division protein that may be involved in stabilizing or promoting the assembly of the division complex. This is Cell division protein DivIB from Weissella koreensis (strain KACC 15510).